The following is a 55-amino-acid chain: Probable Rubredoxin-2 (55 aa).

One can recognise a Rubredoxin-like domain in the interval Met-4–Ile-54. The Fe cation site is built by Cys-9, Cys-11, Cys-41, and Cys-44.

This sequence belongs to the rubredoxin family. Fe(3+) serves as cofactor.

Its function is as follows. Rubredoxin is a small nonheme, iron protein lacking acid-labile sulfide. Its single Fe, chelated to 4 Cys, functions as an electron acceptor and may also stabilize the conformation of the molecule. The sequence is that of Probable Rubredoxin-2 from Methanocaldococcus jannaschii (strain ATCC 43067 / DSM 2661 / JAL-1 / JCM 10045 / NBRC 100440) (Methanococcus jannaschii).